The sequence spans 648 residues: Phosphomethylpyrimidine synthase (648 aa).

Residues N253, M282, Y311, H347, 367–369, 408–411, and E447 contribute to the substrate site; these read SRG and DGLR. Position 451 (H451) interacts with Zn(2+). Substrate is bound at residue Y474. H515 lines the Zn(2+) pocket. The [4Fe-4S] cluster site is built by C595, C598, and C603.

Belongs to the ThiC family. Homodimer. It depends on [4Fe-4S] cluster as a cofactor.

The catalysed reaction is 5-amino-1-(5-phospho-beta-D-ribosyl)imidazole + S-adenosyl-L-methionine = 4-amino-2-methyl-5-(phosphooxymethyl)pyrimidine + CO + 5'-deoxyadenosine + formate + L-methionine + 3 H(+). It participates in cofactor biosynthesis; thiamine diphosphate biosynthesis. Its function is as follows. Catalyzes the synthesis of the hydroxymethylpyrimidine phosphate (HMP-P) moiety of thiamine from aminoimidazole ribotide (AIR) in a radical S-adenosyl-L-methionine (SAM)-dependent reaction. The protein is Phosphomethylpyrimidine synthase of Burkholderia thailandensis (strain ATCC 700388 / DSM 13276 / CCUG 48851 / CIP 106301 / E264).